Consider the following 377-residue polypeptide: N-acetylgalactosamine-6-phosphate deacetylase (377 aa).

A divalent metal cation is bound at residue Glu-125. A substrate-binding site is contributed by 136 to 137 (AH). A divalent metal cation is bound by residues His-191 and His-212. Substrate is bound by residues 215–216 (NG), Arg-223, and 244–247 (DGHH). The active-site Proton donor/acceptor is the Asp-269. Position 302–304 (302–304 (LAG)) interacts with substrate.

This sequence belongs to the metallo-dependent hydrolases superfamily. NagA family. It depends on a divalent metal cation as a cofactor.

It carries out the reaction N-acetyl-D-galactosamine 6-phosphate + H2O = D-galactosamine 6-phosphate + acetate. Functionally, catalyzes the deacetylation of N-acetyl-D-galactosamine 6-phosphate to D-galactosamine 6-phosphate. Can probably also catalyze the deacetylation of N-acetyl-D-glucosamine 6-phosphate to D-glucosamine 6-phosphate. The protein is N-acetylgalactosamine-6-phosphate deacetylase (agaA) of Escherichia coli O157:H7.